A 66-amino-acid chain; its full sequence is Cold shock-like protein (66 aa).

In terms of domain architecture, CSD spans 3-62 (GKVKWFDSKKGYGFITKDEGGDVFVHWSAIEMEGFKTLKEGQVVEFEIQEGKKGPQAAHV).

As to quaternary structure, monomer.

It localises to the cytoplasm. In Thermotoga maritima (strain ATCC 43589 / DSM 3109 / JCM 10099 / NBRC 100826 / MSB8), this protein is Cold shock-like protein (csp).